The following is a 96-amino-acid chain: Cytoplasmic envelopment protein 3 (96 aa).

Gly2 is lipidated: N-myristoyl glycine; by host. Residues 37-43 (DIESEEE) are asp/Glu-rich (acidic). Ser40 carries the phosphoserine modification. The interval 50–96 (PDVRVVTRAPGPQYRRPSDPPSRHTRRRDPDVARPPATLTPPLSDSE) is disordered. A compositionally biased stretch (basic and acidic residues) spans 65-81 (RPSDPPSRHTRRRDPDV).

It belongs to the herpesviridae cytoplasmic envelopment protein 3 family. Interacts with cytoplasmic envelopment protein 2; this interaction is essential for the proper localization of each protein to the assembly complex and thus for the production of infectious virus. Interacts with gE (via C-terminus). Interacts with gD (via C-terminus). Interacts with UL56. In terms of processing, myristoylation and palmitoylation (probably on one or more of the nearby cysteines at the N-terminus) enable membrane-binding and Golgi apparatus-specific targeting and are essential for efficient packaging. Post-translationally, phosphorylated. Phosphorylation does not seem to be required for recycling to the host Golgi apparatus. Packaging is selective for underphosphorylated forms.

It localises to the virion tegument. The protein localises to the virion membrane. The protein resides in the host cell membrane. It is found in the host Golgi apparatus membrane. Its function is as follows. Plays an important role in the cytoplasmic envelopment of tegument proteins and capsids during the assembly and egress processes. Also participates in viral entry at the fusion step probably by regulating the core fusion machinery. This chain is Cytoplasmic envelopment protein 3, found in Homo sapiens (Human).